Here is a 166-residue protein sequence, read N- to C-terminus: Nascent polypeptide-associated complex subunit beta (166 aa).

Disordered regions lie at residues 1–40 (MVLN…EDPK) and 129–166 (HAAS…DKLD). The region spanning 35–100 (GGEDPKLQAA…GVDKELTELV (66 aa)) is the NAC-A/B domain. Residues 141–153 (DDDDVPDVVENFD) are compositionally biased toward acidic residues. Basic and acidic residues predominate over residues 154 to 166 (EADKKETEVDKLD).

It belongs to the NAC-beta family. In terms of assembly, part of the nascent polypeptide-associated complex (NAC), consisting of EGD2 and EGD1. NAC associates with ribosomes via EGD1.

It is found in the cytoplasm. The protein resides in the nucleus. Its function is as follows. Component of the nascent polypeptide-associated complex (NAC), a dynamic component of the ribosomal exit tunnel, protecting the emerging polypeptides from interaction with other cytoplasmic proteins to ensure appropriate nascent protein targeting. The NAC complex also promotes mitochondrial protein import by enhancing productive ribosome interactions with the outer mitochondrial membrane and blocks the inappropriate interaction of ribosomes translating non-secretory nascent polypeptides with translocation sites in the membrane of the endoplasmic reticulum. EGD1 may act as a transcription factor that exert a negative effect on the expression of several genes that are transcribed by RNA polymerase II. This is Nascent polypeptide-associated complex subunit beta (EGD1) from Mycosarcoma maydis (Corn smut fungus).